The following is a 148-amino-acid chain: Ribonuclease H (148 aa).

The RNase H type-1 domain maps to 3-144 (AEETVEIFTD…ADALANRGIE (142 aa)). Positions 12, 50, 72, and 136 each coordinate Mg(2+). The tract at residues 129–148 (HPENERADALANRGIEELKG) is disordered.

Belongs to the RNase H family. In terms of assembly, monomer. Mg(2+) is required as a cofactor.

It is found in the cytoplasm. It catalyses the reaction Endonucleolytic cleavage to 5'-phosphomonoester.. Functionally, endonuclease that specifically degrades the RNA of RNA-DNA hybrids. The chain is Ribonuclease H from Dechloromonas aromatica (strain RCB).